The sequence spans 509 residues: Apurinic-apyrimidinic endonuclease 1 (509 aa).

Positions 1 to 24 (MPRHCCCFVFHFLLYMLLINIVKN) are cleaved as a signal peptide. The interval 144 to 188 (EEKDEECDEKTKQDNNKENIKNETIVQKKKIDKNNKTKEKIKTKS) is disordered. 2 stretches are compositionally biased toward basic and acidic residues: residues 152-164 (EKTK…ENIK) and 175-188 (DKNN…KTKS). Zn(2+) contacts are provided by H291, H331, E367, D401, H404, H438, D451, H453, and E483. H404 lines the Mn(2+) pocket. 2 residues coordinate Mn(2+): D451 and H453.

It belongs to the AP endonuclease 2 family. Zn(2+) is required as a cofactor. The cofactor is Mn(2+). Post-translationally, may be proteolytically cleaved.

The protein resides in the mitochondrion. Its function is as follows. Plays a role in mitochondrial DNA base excision repair (BER) pathway induced by oxidative stress. Has apurinic/apyrimidinic (AP) endonuclease activity towards double-stranded DNA (dsDNA) with a preference for C as opposite base. Has 3'-phosphatase activity; removes 3'-phosphate from blunt-end, recessed, and gapped DNA templates and thus, removes 3'-blocks for DNA polymerase activity during BER. Lacks 3'-5' exonuclease activity and does not cleave damaged bases by nucleotide incision repair (NIR). This is Apurinic-apyrimidinic endonuclease 1 from Plasmodium berghei (strain Anka).